The sequence spans 802 residues: DEAD-box ATP-dependent RNA helicase 28 (802 aa).

A disordered region spans residues 1-179 (MDADFRFDPD…TDKKSGVVDP (179 aa)). Composition is skewed to acidic residues over residues 76-131 (GDSE…EELE) and 138-169 (KSDEVEEGEEGQDGEEEEKEEGDEEAAEEEEE). 2 coiled-coil regions span residues 90–122 (DSEEDDKEVVEGEIDDEEDEVEESEDDDEGVEV) and 149–174 (QDGEEEEKEEGDEEAAEEEEETDKKS). The Q motif signature appears at 194 to 222 (NSFLELNLSRPLLRACEALGYQKPTPIQA). A Helicase ATP-binding domain is found at 225–399 (IPLALTGRDI…TLSLNKPVRL (175 aa)). 238 to 245 (AITGSGKT) serves as a coordination point for ATP. The DEAD box signature appears at 347–350 (DEAD). A Helicase C-terminal domain is found at 429–573 (VLLALCLKTF…SRIVAEKPVA (145 aa)). Residues 572 to 616 (VAECAKLIEELEDQISTIIQEEREERILRKAEMEATKAENMIAHK) are a coiled coil. Residues 639–802 (KAAKESTSQG…KSKSRYNRRK (164 aa)) form a disordered region. Polar residues predominate over residues 644–659 (STSQGKSNSGVISAQQ). The span at 666-684 (KEKKRREREKNLPRKKRRR) shows a compositional bias: basic residues. Positions 671 to 712 (REREKNLPRKKRRRLEAEREMLEDESEDEEEAKESKGGKKEK) form a coiled coil. The segment covering 691-702 (MLEDESEDEEEA) has biased composition (acidic residues). Over residues 776–802 (RSLKKNNVMRKKSKNSFKSKSRYNRRK) the composition is skewed to basic residues.

This sequence belongs to the DEAD box helicase family. DDX27/DRS1 subfamily.

The enzyme catalyses ATP + H2O = ADP + phosphate + H(+). The sequence is that of DEAD-box ATP-dependent RNA helicase 28 from Oryza sativa subsp. japonica (Rice).